The sequence spans 488 residues: Serine/threonine-protein kinase 32C (488 aa).

The segment at methionine 1–arginine 56 is disordered. A phosphoserine mark is found at serine 10, serine 17, and serine 18. Residues alanine 24 to proline 33 show a composition bias toward low complexity. The region spanning phenylalanine 94–leucine 354 is the Protein kinase domain. Residues isoleucine 100–valine 108 and lysine 123 each bind ATP. Catalysis depends on aspartate 217, which acts as the Proton acceptor. Positions histidine 397–asparagine 406 are enriched in basic residues. Disordered regions lie at residues histidine 397–asparagine 420 and lysine 443–serine 488.

This sequence belongs to the protein kinase superfamily. Ser/Thr protein kinase family. It depends on Mg(2+) as a cofactor.

It carries out the reaction L-seryl-[protein] + ATP = O-phospho-L-seryl-[protein] + ADP + H(+). The enzyme catalyses L-threonyl-[protein] + ATP = O-phospho-L-threonyl-[protein] + ADP + H(+). The polypeptide is Serine/threonine-protein kinase 32C (Mus musculus (Mouse)).